A 509-amino-acid chain; its full sequence is ATP synthase subunit beta (509 aa).

Residues 1–28 (MAKAATPKETAAAKKPAAPKKAASAKTA) are disordered. An ATP-binding site is contributed by 187 to 194 (GGAGVGKT).

This sequence belongs to the ATPase alpha/beta chains family. In terms of assembly, F-type ATPases have 2 components, CF(1) - the catalytic core - and CF(0) - the membrane proton channel. CF(1) has five subunits: alpha(3), beta(3), gamma(1), delta(1), epsilon(1). CF(0) has three main subunits: a(1), b(2) and c(9-12). The alpha and beta chains form an alternating ring which encloses part of the gamma chain. CF(1) is attached to CF(0) by a central stalk formed by the gamma and epsilon chains, while a peripheral stalk is formed by the delta and b chains.

It is found in the cell inner membrane. It catalyses the reaction ATP + H2O + 4 H(+)(in) = ADP + phosphate + 5 H(+)(out). Functionally, produces ATP from ADP in the presence of a proton gradient across the membrane. The catalytic sites are hosted primarily by the beta subunits. The polypeptide is ATP synthase subunit beta (Sinorhizobium medicae (strain WSM419) (Ensifer medicae)).